Consider the following 181-residue polypeptide: 28 kDa heat- and acid-stable phosphoprotein (181 aa).

The span at 1–14 (MPKGGRKGGHKGRA) shows a compositional bias: basic residues. The disordered stretch occupies residues 1-117 (MPKGGRKGGH…SRREREEIEK (117 aa)). Position 18 is a phosphothreonine (Thr-18). Residue Ser-19 is modified to Phosphoserine. Residues 30–59 (EKQKAREEEEQKEGGDGAAGDPKKEKKSLD) show a composition bias toward basic and acidic residues. Lys-52 is covalently cross-linked (Glycyl lysine isopeptide (Lys-Gly) (interchain with G-Cter in SUMO2)). A phosphoserine mark is found at Ser-57, Ser-60, and Ser-63. Over residues 60 to 69 (SDESEDEEDD) the composition is skewed to acidic residues. Tyr-70 is subject to Phosphotyrosine. The segment covering 102–117 (DGPKELSRREREEIEK) has biased composition (basic and acidic residues). N6-methyllysine is present on Lys-126. 2 positions are modified to N6-acetyllysine: Lys-132 and Lys-164. Residues 151–167 (EEAARKKEEERKAKDDA) show a composition bias toward basic and acidic residues. A disordered region spans residues 151-181 (EEAARKKEEERKAKDDATLSGKRMQSLSLNK). Residues Ser-176 and Ser-178 each carry the phosphoserine modification.

Belongs to the PDAP1 family.

Enhances PDGFA-stimulated cell growth in fibroblasts, but inhibits the mitogenic effect of PDGFB. This chain is 28 kDa heat- and acid-stable phosphoprotein (PDAP1), found in Homo sapiens (Human).